We begin with the raw amino-acid sequence, 419 residues long: Peptide chain release factor subunit 1 (419 aa).

The protein belongs to the eukaryotic release factor 1 family. In terms of assembly, heterodimer of two subunits, one of which binds GTP.

It localises to the cytoplasm. Directs the termination of nascent peptide synthesis (translation) in response to the termination codons UAA, UAG and UGA. The polypeptide is Peptide chain release factor subunit 1 (Methanococcus maripaludis (strain DSM 14266 / JCM 13030 / NBRC 101832 / S2 / LL)).